We begin with the raw amino-acid sequence, 255 residues long: Small ribosomal subunit protein uS2 (255 aa).

It belongs to the universal ribosomal protein uS2 family.

The protein is Small ribosomal subunit protein uS2 of Streptococcus thermophilus (strain ATCC BAA-491 / LMD-9).